The following is a 144-amino-acid chain: NADH-ubiquinone oxidoreductase chain 6 (144 aa).

Helical transmembrane passes span 1–21 (MIKLFFVLAIFSSIISYMNID), 25–45 (SSFFLIFSLLFSMPIISMSMH), 46–66 (IWFSYFICLLFLSGIFVILVY), 75–95 (VVKSYMSLFLLLISIIYFSPV), and 108–128 (FYYSIYWFIFSFILICLLFFM).

The protein belongs to the complex I subunit 6 family.

Its subcellular location is the mitochondrion membrane. The enzyme catalyses a ubiquinone + NADH + 5 H(+)(in) = a ubiquinol + NAD(+) + 4 H(+)(out). Functionally, core subunit of the mitochondrial membrane respiratory chain NADH dehydrogenase (Complex I) that is believed to belong to the minimal assembly required for catalysis. Complex I functions in the transfer of electrons from NADH to the respiratory chain. The immediate electron acceptor for the enzyme is believed to be ubiquinone. The chain is NADH-ubiquinone oxidoreductase chain 6 (nd6) from Caenorhabditis briggsae.